A 576-amino-acid chain; its full sequence is Coilin (576 aa).

S105 carries the post-translational modification Phosphoserine. T122 is modified (phosphothreonine). Disordered regions lie at residues 125 to 330 (DCKY…CLMS) and 352 to 389 (RPGP…SLPA). Glycyl lysine isopeptide (Lys-Gly) (interchain with G-Cter in SUMO2) cross-links involve residues K127, K151, and K160. Residue S184 is modified to Phosphoserine; by VRK1 and VRK2. Residues K204 and K209 each participate in a glycyl lysine isopeptide (Lys-Gly) (interchain with G-Cter in SUMO2) cross-link. A compositionally biased stretch (polar residues) spans 214–225 (QRCSSPKGSARN). A 1-1 repeat occupies 223–226 (ARNS). The 2 X 4 AA repeats of A-R-N-S stretch occupies residues 223 to 271 (ARNSLVKAKRKGSVSVCSKESPSSSSESESCDESISDGPSKVTLEARNS). Over residues 235–250 (SVSVCSKESPSSSSES) the composition is skewed to low complexity. Phosphoserine is present on residues S248, S250, S256, S271, and S272. The stretch at 268 to 271 (ARNS) is one 1-2 repeat. A compositionally biased stretch (basic and acidic residues) spans 270–285 (NSSEKLPTELSKEEPS). Glycyl lysine isopeptide (Lys-Gly) (interchain with G-Cter in SUMO2) cross-links involve residues K274 and K281. T290 is modified (phosphothreonine). Glycyl lysine isopeptide (Lys-Gly) (interchain with G-Cter in SUMO2) cross-links involve residues K293 and K297. S301 bears the Phosphoserine mark. The segment covering 301–320 (SLTPSKGKTSGTTSSSSDSS) has biased composition (low complexity). Position 303 is a phosphothreonine (T303). A 2-1 repeat occupies 386–389 (SLPA). Residues 386 to 520 (SLPASLGRGW…DIEILSSLPA (135 aa)) are 2 X 4 AA repeats of S-L-P-A. Positions 392-420 (GRGWGREENLFSWKGAKGRGMRGRGRGRG) are required for interaction with SMN. S403 bears the Phosphoserine mark. A run of 4 repeats spans residues 413–414 (RG), 415–416 (RG), 417–418 (RG), and 419–420 (RG). A 4 X 2 AA tandem repeats of R-G region spans residues 413-420 (RGRGRGRG). K444 is covalently cross-linked (Glycyl lysine isopeptide (Lys-Gly) (interchain with G-Cter in SUMO2)). Position 456 is a phosphothreonine (T456). Residues 460–559 (DYSLLPLLAA…ITVFWKELID (100 aa)) form the Tudor; atypical domain. S487 and S489 each carry phosphoserine. A Glycyl lysine isopeptide (Lys-Gly) (interchain with G-Cter in SUMO2) cross-link involves residue K496. Residues 517-520 (SLPA) form a 2-2 repeat. S566 is modified (phosphoserine).

The protein belongs to the coilin family. As to quaternary structure, interacts with ANKS1B. Interacts with SMN1 (via Tudor domain). Interacts (via C-terminus) with AK6. Interacts with WRAP53/TCAB1. Interacts with HMBOX1. Interacts with PSME3; the interaction is inhibited by PSME3IP1. Interacts wit UBL5. In terms of processing, symmetrical dimethylation of arginine residues within the RG repeat region enhances affinity for SMN, and thus localization of SMN complexes to CBs. Post-translationally, phosphorylated by VRK1. Phosphorylation during mitosis is associated with disassembly of CBs. Found in all the cell types examined.

The protein resides in the nucleus. It localises to the cajal body. Component of nuclear coiled bodies, also known as Cajal bodies or CBs, which are involved in the modification and assembly of nucleoplasmic snRNPs. The polypeptide is Coilin (COIL) (Homo sapiens (Human)).